The sequence spans 1374 residues: DNA-directed RNA polymerase subunit beta' (1374 aa).

Residues 1–47 (MTSTSPKSRKPSTKTTKSKSKSKSKSKAAKAAAASASPALARTPPQF) are disordered. A compositionally biased stretch (basic residues) spans 7 to 28 (KSRKPSTKTTKSKSKSKSKSKA). Residues 29–45 (AKAAAASASPALARTPP) are compositionally biased toward low complexity. Cysteine 258, cysteine 325, cysteine 332, and cysteine 335 together coordinate Zn(2+). A disordered region spans residues 1343-1374 (VRPTGENELEEEQLPDPSALEGLQQEGLLTEE). A compositionally biased stretch (low complexity) spans 1362–1374 (LEGLQQEGLLTEE).

It belongs to the RNA polymerase beta' chain family. RpoC2 subfamily. As to quaternary structure, in cyanobacteria the RNAP catalytic core is composed of 2 alpha, 1 beta, 1 beta', 1 gamma and 1 omega subunit. When a sigma factor is associated with the core the holoenzyme is formed, which can initiate transcription. Requires Zn(2+) as cofactor.

It catalyses the reaction RNA(n) + a ribonucleoside 5'-triphosphate = RNA(n+1) + diphosphate. In terms of biological role, DNA-dependent RNA polymerase catalyzes the transcription of DNA into RNA using the four ribonucleoside triphosphates as substrates. This chain is DNA-directed RNA polymerase subunit beta', found in Prochlorococcus marinus (strain MIT 9303).